The sequence spans 57 residues: Peptide BmKa1 (57 aa).

The first 22 residues, 1-22, serve as a signal peptide directing secretion; it reads MKPRVFFLLFLLVAAMIETGES. Acidic residues-rich tracts occupy residues 20–29 and 45–57; these read GESEENEEGS and VDNE…GDSD. The segment at 20-57 is disordered; it reads GESEENEEGSNESGKSTEAKNTDASVDNEDSDIDGDSD.

Belongs to the non-disulfide-bridged peptide (NDBP) superfamily. As to expression, expressed by the venom gland.

The protein resides in the secreted. The protein is Peptide BmKa1 of Olivierus martensii (Manchurian scorpion).